A 186-amino-acid chain; its full sequence is MFITSILRLIISYGLLEQLILESFLDLEYPENIIDSKNQNSMDGELNVMESLRNSHPKLYIREISNDNITFPCEDNNGWIEYKRTLTECDDLKIQQYATQMRWRISQNKRQRAVYYIGLDDDGSIYGLSGKAILDNLDYFVKITNIINASIFSVLLININGSTIIKIGVTIKKLKDDIYFNEDEEY.

This is an uncharacterized protein from Acanthamoeba polyphaga (Amoeba).